Here is a 349-residue protein sequence, read N- to C-terminus: Anthranilate phosphoribosyltransferase (349 aa).

5-phospho-alpha-D-ribose 1-diphosphate-binding positions include Gly-82, 85-86 (GD), 92-95 (NVST), 110-118 (KHGNRAVSG), and Ser-122. Gly-82 contributes to the anthranilate binding site. Mg(2+) is bound at residue Ser-94. Asn-113 lines the anthranilate pocket. Arg-168 is a binding site for anthranilate. Residues Asp-227 and Glu-228 each contribute to the Mg(2+) site.

It belongs to the anthranilate phosphoribosyltransferase family. Homodimer. The cofactor is Mg(2+).

The enzyme catalyses N-(5-phospho-beta-D-ribosyl)anthranilate + diphosphate = 5-phospho-alpha-D-ribose 1-diphosphate + anthranilate. It participates in amino-acid biosynthesis; L-tryptophan biosynthesis; L-tryptophan from chorismate: step 2/5. Its function is as follows. Catalyzes the transfer of the phosphoribosyl group of 5-phosphorylribose-1-pyrophosphate (PRPP) to anthranilate to yield N-(5'-phosphoribosyl)-anthranilate (PRA). The chain is Anthranilate phosphoribosyltransferase from Pseudomonas fluorescens (strain SBW25).